Here is a 345-residue protein sequence, read N- to C-terminus: Phosphoribosylformylglycinamidine cyclo-ligase (345 aa).

Belongs to the AIR synthase family.

It localises to the cytoplasm. The enzyme catalyses 2-formamido-N(1)-(5-O-phospho-beta-D-ribosyl)acetamidine + ATP = 5-amino-1-(5-phospho-beta-D-ribosyl)imidazole + ADP + phosphate + H(+). It participates in purine metabolism; IMP biosynthesis via de novo pathway; 5-amino-1-(5-phospho-D-ribosyl)imidazole from N(2)-formyl-N(1)-(5-phospho-D-ribosyl)glycinamide: step 2/2. The sequence is that of Phosphoribosylformylglycinamidine cyclo-ligase from Anaeromyxobacter sp. (strain K).